The chain runs to 128 residues: MANPRSNRKKVKKQVVDAVAHIHASFNNTIVTITDRQGNALSWATAGGSGFRGSRKSTPFAAQVASERAATAAAEYGVKNVDVLVKGPGPGRESAVRALNAAGFRVQSITDATPVPHNGCRPPKKRRV.

Belongs to the universal ribosomal protein uS11 family. In terms of assembly, part of the 30S ribosomal subunit. Interacts with proteins S7 and S18. Binds to IF-3.

Functionally, located on the platform of the 30S subunit, it bridges several disparate RNA helices of the 16S rRNA. Forms part of the Shine-Dalgarno cleft in the 70S ribosome. This chain is Small ribosomal subunit protein uS11, found in Chromohalobacter salexigens (strain ATCC BAA-138 / DSM 3043 / CIP 106854 / NCIMB 13768 / 1H11).